Reading from the N-terminus, the 138-residue chain is Acidic phospholipase A2 beta (138 aa).

The signal sequence occupies residues 1–16; that stretch reads MRTLWIVAVLLLGVEG. 7 disulfides stabilise this stretch: Cys-42-Cys-131, Cys-44-Cys-60, Cys-59-Cys-111, Cys-65-Cys-138, Cys-66-Cys-104, Cys-73-Cys-97, and Cys-91-Cys-102. Ca(2+) contacts are provided by Tyr-43, Gly-45, and Gly-47. His-63 is a catalytic residue. Asp-64 lines the Ca(2+) pocket. Asp-105 is a catalytic residue.

This sequence belongs to the phospholipase A2 family. Group II subfamily. D49 sub-subfamily. Dimer. Ca(2+) serves as cofactor. Expressed by the venom gland.

It is found in the secreted. The enzyme catalyses a 1,2-diacyl-sn-glycero-3-phosphocholine + H2O = a 1-acyl-sn-glycero-3-phosphocholine + a fatty acid + H(+). Its function is as follows. PLA2 catalyzes the calcium-dependent hydrolysis of the 2-acyl groups in 3-sn-phosphoglycerides. The chain is Acidic phospholipase A2 beta from Crotalus adamanteus (Eastern diamondback rattlesnake).